The sequence spans 314 residues: uncharacterized protein (314 aa).

A run of 2 helical transmembrane segments spans residues 23–43 (LALGPVHPGGPTLIDLLMALF) and 98–118 (MASGIGGALSGALGGVMGPLT). The segment covering 165–184 (GLGSGAGGGDVGGGGAGGTT) has biased composition (gly residues). The disordered stretch occupies residues 165–314 (GLGSGAGGGD…APDEKTDAGE (150 aa)). Positions 190–202 (GPPPVPTSSPPTT) are enriched in pro residues. 2 stretches are compositionally biased toward low complexity: residues 203 to 212 (PAGAPTKSAT) and 219 to 232 (ASPASAHMGAAGMP). A helical membrane pass occupies residues 221–241 (PASAHMGAAGMPMVPPGAMGA). Residues 294-314 (LLPEHKDFGRIAPDEKTDAGE) show a composition bias toward basic and acidic residues.

It localises to the cell membrane. This is an uncharacterized protein from Mycobacterium tuberculosis (strain ATCC 25618 / H37Rv).